Reading from the N-terminus, the 445-residue chain is Putative aldehyde dehydrogenase AldX (445 aa).

Active-site residues include E214 and C248.

It belongs to the aldehyde dehydrogenase family.

It catalyses the reaction an aldehyde + NAD(+) + H2O = a carboxylate + NADH + 2 H(+). The protein is Putative aldehyde dehydrogenase AldX (aldX) of Bacillus subtilis (strain 168).